The primary structure comprises 392 residues: Heat-inducible transcription repressor HrcA (392 aa).

The protein belongs to the HrcA family.

In terms of biological role, negative regulator of class I heat shock genes (grpE-dnaK-dnaJ and groELS operons). Prevents heat-shock induction of these operons. The protein is Heat-inducible transcription repressor HrcA of Synechococcus sp. (strain JA-3-3Ab) (Cyanobacteria bacterium Yellowstone A-Prime).